We begin with the raw amino-acid sequence, 335 residues long: UPF0324 membrane protein gbs1193 (335 aa).

The next 9 membrane-spanning stretches (helical) occupy residues 20–42 (SWLLGLYLPLIGAPVFAILIGII), 57–79 (IAFTSKYILQTAVVLLGFGLNLM), 84–106 (VGISSLPIIIMTISISLIIAYVL), 116–138 (IATLIGVGSSICGGSAIAATAPV), 151–173 (SVIFLFNILAALIFPTLGNFIGL), 210–232 (GATIVKLTRTLAIIPITIVLSIY), 253–275 (VLYFILASLLTTIVASLGFSLRI), 285–304 (FFIVMAMGAIGINTNVSKLI), and 311–333 (ILLGAACWLGIIIVSLTMQAILG).

Belongs to the UPF0324 family.

The protein resides in the cell membrane. This chain is UPF0324 membrane protein gbs1193, found in Streptococcus agalactiae serotype III (strain NEM316).